The following is a 525-amino-acid chain: Glutamate--cysteine ligase (525 aa).

It belongs to the glutamate--cysteine ligase type 1 family. Type 1 subfamily.

The enzyme catalyses L-cysteine + L-glutamate + ATP = gamma-L-glutamyl-L-cysteine + ADP + phosphate + H(+). Its pathway is sulfur metabolism; glutathione biosynthesis; glutathione from L-cysteine and L-glutamate: step 1/2. This is Glutamate--cysteine ligase from Hahella chejuensis (strain KCTC 2396).